The chain runs to 600 residues: MTKENLENELKTLPNSTGVYQYFNQEGKLLYVGKAKNLKNRVRSYFAFTPNLHANPRNSLRIQKMIEETVHLEFIATNSEADALILENSFIKQLHPKYNILLRDDKTYPYIYVDFEEEFPRFEITRKLVKKSKIKYFGPFFKGARELLDALYLYYPLKQKASCKSPCIFYQISRCLAPCDKLISREKYLEILDEAIHALLNPSVLLKNLEKQMLVLAQNENYEEAAKVRDQIAMIKDLEVKVEIDIAKLEDFEVFALAFKNSVLSTLRFVVQNGKIISANSKITPIKNDIQWDQNEIYKQLILENFSMDIPLLANVIYVYEEFEDRVLLEEILSQRFDKKISIKIPKIGEKRRICDLAFQNALLNIEKEQKNHDFTIQKELKSYFELENLPNDIEIFDNSHLQGVANVGAMVTYRINSWDKSKYRKFHLKHKNDYDQMREVLTRRALDFDKIPPPDLWLIDGGKALLDLAKEIIVSSGVNVDILAISKEKIDAKAHRAKGGAKDKIHSLKGEFSLSINDKKLQFLQKLRDEAHRFAISFHQNTKKKQDLKSSKLANLGLSSGVMQKLLAYYGNFESIYKADFKDLTMLVGRKAAQKIKEN.

The region spanning Asn15–Ile100 is the GIY-YIG domain. The UVR domain maps to Ser203–Leu238.

This sequence belongs to the UvrC family. Interacts with UvrB in an incision complex.

It localises to the cytoplasm. In terms of biological role, the UvrABC repair system catalyzes the recognition and processing of DNA lesions. UvrC both incises the 5' and 3' sides of the lesion. The N-terminal half is responsible for the 3' incision and the C-terminal half is responsible for the 5' incision. The protein is UvrABC system protein C of Campylobacter jejuni subsp. jejuni serotype O:2 (strain ATCC 700819 / NCTC 11168).